We begin with the raw amino-acid sequence, 54 residues long: Photosystem II reaction center protein K (54 aa).

The propeptide occupies 1-17 (MFQISLDMISNKINLLG). Residues 29–49 (IVDVLPIIPILFFLLAFVWQA) form a helical membrane-spanning segment.

This sequence belongs to the PsbK family. As to quaternary structure, PSII is composed of 1 copy each of membrane proteins PsbA, PsbB, PsbC, PsbD, PsbE, PsbF, PsbH, PsbI, PsbJ, PsbK, PsbL, PsbM, PsbT, PsbY, PsbZ, Psb30/Ycf12, at least 3 peripheral proteins of the oxygen-evolving complex and a large number of cofactors. It forms dimeric complexes.

The protein localises to the plastid. The protein resides in the chloroplast thylakoid membrane. In terms of biological role, one of the components of the core complex of photosystem II (PSII). PSII is a light-driven water:plastoquinone oxidoreductase that uses light energy to abstract electrons from H(2)O, generating O(2) and a proton gradient subsequently used for ATP formation. It consists of a core antenna complex that captures photons, and an electron transfer chain that converts photonic excitation into a charge separation. The sequence is that of Photosystem II reaction center protein K from Euglena stellata.